Here is a 339-residue protein sequence, read N- to C-terminus: Protein FAM131B (339 aa).

Residues 1 to 22 (MDSTSSLHGSSLHRPSTEQTRT) are disordered. A phosphoserine mark is found at Ser-47, Ser-114, and Ser-117. The tract at residues 222 to 339 (GPAFGDSQPS…PLLTQPSTPA (118 aa)) is disordered. Polar residues-rich tracts occupy residues 239–250 (QPASGYSAQEPS) and 324–339 (PTTS…STPA). Thr-325 is modified (phosphothreonine). Ser-327 bears the Phosphoserine mark.

The protein belongs to the FAM131 family.

This is Protein FAM131B (FAM131B) from Bos taurus (Bovine).